Here is a 144-residue protein sequence, read N- to C-terminus: NADH-ubiquinone oxidoreductase chain 6 (144 aa).

Transmembrane regions (helical) follow at residues 1–21, 26–46, 47–67, 76–96, and 108–128; these read MLGSFFFLAIISCVMSYINVD, SFFLIFSLLMVMPLISFFLHV, WFSYFICLLFLSGIFVILVYF, VVTPFYFVGGVLSVFFFYPFF, and FYFSVYWMLLVWVIFVLIFFM.

It belongs to the complex I subunit 6 family.

The protein resides in the mitochondrion membrane. The enzyme catalyses a ubiquinone + NADH + 5 H(+)(in) = a ubiquinol + NAD(+) + 4 H(+)(out). In terms of biological role, core subunit of the mitochondrial membrane respiratory chain NADH dehydrogenase (Complex I) that is believed to belong to the minimal assembly required for catalysis. Complex I functions in the transfer of electrons from NADH to the respiratory chain. The immediate electron acceptor for the enzyme is believed to be ubiquinone. This is NADH-ubiquinone oxidoreductase chain 6 (ND6) from Ascaris suum (Pig roundworm).